We begin with the raw amino-acid sequence, 121 residues long: Large ribosomal subunit protein uL14 (121 aa).

Belongs to the universal ribosomal protein uL14 family. In terms of assembly, part of the 50S ribosomal subunit. Forms a cluster with proteins L3 and L19. In the 70S ribosome, L14 and L19 interact and together make contacts with the 16S rRNA in bridges B5 and B8.

In terms of biological role, binds to 23S rRNA. Forms part of two intersubunit bridges in the 70S ribosome. The sequence is that of Large ribosomal subunit protein uL14 from Synechococcus sp. (strain WH7803).